The following is a 200-amino-acid chain: Rho GDP-dissociation inhibitor 2 (200 aa).

Positions methionine 1–aspartate 40 are disordered. The residue at position 2 (threonine 2) is an N-acetylthreonine. The residue at position 20 (lysine 20) is an N6-acetyllysine. Tyrosine 23 carries the post-translational modification Phosphotyrosine. N6-acetyllysine is present on residues lysine 24, lysine 39, lysine 46, lysine 101, and lysine 123. A compositionally biased stretch (basic and acidic residues) spans serine 30–aspartate 40. Serine 144 is modified (phosphoserine). Lysine 174 carries the N6-acetyllysine modification.

Belongs to the Rho GDI family. As to quaternary structure, interacts with RHOA. Interacts with RAC1. Interacts with RAC2. Interacts with CDC42.

It localises to the cytoplasm. Its subcellular location is the cytosol. In terms of biological role, regulates the GDP/GTP exchange reaction of the Rho proteins by inhibiting the dissociation of GDP from them, and the subsequent binding of GTP to them. Regulates reorganization of the actin cytoskeleton mediated by Rho family members. This Bos taurus (Bovine) protein is Rho GDP-dissociation inhibitor 2 (ARHGDIB).